A 396-amino-acid polypeptide reads, in one-letter code: Tryptophan synthase beta chain (396 aa).

Lys-86 is subject to N6-(pyridoxal phosphate)lysine.

This sequence belongs to the TrpB family. In terms of assembly, tetramer of two alpha and two beta chains. The cofactor is pyridoxal 5'-phosphate.

The catalysed reaction is (1S,2R)-1-C-(indol-3-yl)glycerol 3-phosphate + L-serine = D-glyceraldehyde 3-phosphate + L-tryptophan + H2O. It functions in the pathway amino-acid biosynthesis; L-tryptophan biosynthesis; L-tryptophan from chorismate: step 5/5. Its function is as follows. The beta subunit is responsible for the synthesis of L-tryptophan from indole and L-serine. This Serratia proteamaculans (strain 568) protein is Tryptophan synthase beta chain.